Here is a 95-residue protein sequence, read N- to C-terminus: Large ribosomal subunit protein bL25 (95 aa).

The protein belongs to the bacterial ribosomal protein bL25 family. In terms of assembly, part of the 50S ribosomal subunit; part of the 5S rRNA/L5/L18/L25 subcomplex. Contacts the 5S rRNA. Binds to the 5S rRNA independently of L5 and L18.

In terms of biological role, this is one of the proteins that binds to the 5S RNA in the ribosome where it forms part of the central protuberance. This Tolumonas auensis (strain DSM 9187 / NBRC 110442 / TA 4) protein is Large ribosomal subunit protein bL25.